The following is a 273-amino-acid chain: Large ribosomal subunit protein uL2 (273 aa).

Residues 221–262 are disordered; that stretch reads RGTAMNPVDHPHGGGEGRNFGKHPVTPWGVQTKGKKTRHNKR. The span at 253–262 shows a compositional bias: basic residues; the sequence is KGKKTRHNKR.

This sequence belongs to the universal ribosomal protein uL2 family. In terms of assembly, part of the 50S ribosomal subunit. Forms a bridge to the 30S subunit in the 70S ribosome.

In terms of biological role, one of the primary rRNA binding proteins. Required for association of the 30S and 50S subunits to form the 70S ribosome, for tRNA binding and peptide bond formation. It has been suggested to have peptidyltransferase activity; this is somewhat controversial. Makes several contacts with the 16S rRNA in the 70S ribosome. In Haemophilus ducreyi (strain 35000HP / ATCC 700724), this protein is Large ribosomal subunit protein uL2.